A 230-amino-acid chain; its full sequence is Small ribosomal subunit protein uS3 (230 aa).

Residues V39–R107 form the KH type-2 domain.

The protein belongs to the universal ribosomal protein uS3 family. Part of the 30S ribosomal subunit. Forms a tight complex with proteins S10 and S14.

Functionally, binds the lower part of the 30S subunit head. Binds mRNA in the 70S ribosome, positioning it for translation. In Shewanella amazonensis (strain ATCC BAA-1098 / SB2B), this protein is Small ribosomal subunit protein uS3.